The chain runs to 197 residues: Guanylate kinase (197 aa).

In terms of domain architecture, Guanylate kinase-like spans 10 to 187; sequence GSLFIVSAPA…AYQVLRSILI (178 aa). An ATP-binding site is contributed by 17–24; that stretch reads APAGTGKT.

This sequence belongs to the guanylate kinase family.

It localises to the cytoplasm. The catalysed reaction is GMP + ATP = GDP + ADP. Essential for recycling GMP and indirectly, cGMP. This is Guanylate kinase from Protochlamydia amoebophila (strain UWE25).